Consider the following 168-residue polypeptide: Protein A40 (168 aa).

The Cytoplasmic portion of the chain corresponds to 1-9; it reads MNKPKTDYA. A helical; Signal-anchor for type II membrane protein membrane pass occupies residues 10 to 30; the sequence is GYACCVICGLIVGIIFTATLL. Residues 31–168 lie on the Extracellular side of the membrane; sequence KVVERKLVHT…TTFLSYHYFG (138 aa). The 106-residue stretch at 63 to 168 folds into the C-type lectin domain; sequence YNNKCIHLST…TTFLSYHYFG (106 aa).

This sequence belongs to the poxviridae A40 protein family.

It localises to the host membrane. The sequence is that of Protein A40 from Homo sapiens (Human).